The sequence spans 91 residues: DNA-directed RNA polymerase subunit omega (91 aa).

This sequence belongs to the RNA polymerase subunit omega family. The RNAP catalytic core consists of 2 alpha, 1 beta, 1 beta' and 1 omega subunit. When a sigma factor is associated with the core the holoenzyme is formed, which can initiate transcription.

The enzyme catalyses RNA(n) + a ribonucleoside 5'-triphosphate = RNA(n+1) + diphosphate. Promotes RNA polymerase assembly. Latches the N- and C-terminal regions of the beta' subunit thereby facilitating its interaction with the beta and alpha subunits. In Aeromonas hydrophila subsp. hydrophila (strain ATCC 7966 / DSM 30187 / BCRC 13018 / CCUG 14551 / JCM 1027 / KCTC 2358 / NCIMB 9240 / NCTC 8049), this protein is DNA-directed RNA polymerase subunit omega.